Reading from the N-terminus, the 561-residue chain is 3-hydroxy-3-methylglutaryl-coenzyme A reductase 3 (561 aa).

The next 2 helical transmembrane spans lie at 25 to 45 (PIRH…AYLM) and 69 to 89 (IFGL…AFVQ). The linker stretch occupies residues 90-145 (SIVSSSDDEEEDFLVGPARGSSAAAAVAPPPPPSSPAQCSLLGSPHDDAARERMPE). The segment at 113–146 (AAAVAPPPPPSSPAQCSLLGSPHDDAARERMPEE) is disordered. Positions 134–143 (PHDDAARERM) are enriched in basic and acidic residues. Residues 146 to 561 (EDEEIVSSVV…SSKDMSKVIS (416 aa)) form a catalytic region. The active-site Charge relay system is glutamate 240. A glycan (N-linked (GlcNAc...) asparagine) is linked at asparagine 304. Residues lysine 372 and aspartate 448 each act as charge relay system in the active site. The active-site Proton donor is the histidine 546. A glycan (N-linked (GlcNAc...) asparagine) is linked at asparagine 550.

It belongs to the HMG-CoA reductase family.

The protein resides in the endoplasmic reticulum membrane. It carries out the reaction (R)-mevalonate + 2 NADP(+) + CoA = (3S)-3-hydroxy-3-methylglutaryl-CoA + 2 NADPH + 2 H(+). The protein operates within metabolic intermediate biosynthesis; (R)-mevalonate biosynthesis; (R)-mevalonate from acetyl-CoA: step 3/3. Catalyzes the synthesis of mevalonate. The specific precursor of all isoprenoid compounds present in plants. This chain is 3-hydroxy-3-methylglutaryl-coenzyme A reductase 3 (HMG3), found in Oryza sativa subsp. japonica (Rice).